A 526-amino-acid polypeptide reads, in one-letter code: Peptide chain release factor 3 (526 aa).

One can recognise a tr-type G domain in the interval 8 to 277 (GKRRTFAIIS…GLTEWAPAPQ (270 aa)). Residues 17-24 (SHPDAGKT), 85-89 (DTPGH), and 139-142 (NKMD) contribute to the GTP site.

This sequence belongs to the TRAFAC class translation factor GTPase superfamily. Classic translation factor GTPase family. PrfC subfamily.

Its subcellular location is the cytoplasm. Increases the formation of ribosomal termination complexes and stimulates activities of RF-1 and RF-2. It binds guanine nucleotides and has strong preference for UGA stop codons. It may interact directly with the ribosome. The stimulation of RF-1 and RF-2 is significantly reduced by GTP and GDP, but not by GMP. In Aliivibrio salmonicida (strain LFI1238) (Vibrio salmonicida (strain LFI1238)), this protein is Peptide chain release factor 3.